A 347-amino-acid polypeptide reads, in one-letter code: MRAVRLVEIGKPLSLQEIGVPKPKGPQVLIKVEAAGVCHSDVHMRQGRFGNLRIVEDLGVKLPVTLGHEIAGKIEEVGDEVVGYSKGDLVAVNPWQGEGNCYYCRIGEEHLCDSPRWLGINFDGAYAEYVIVPHYKYMYKLRRLNAVEAAPLTCSGITTYRAVRKASLDPTKTLLVVGAGGGLGTMAVQIAKAVSGATIIGVDVREEAVEAAKRAGADYVINASMQDPLAEIRRITESKGVDAVIDLNNSEKTLSVYPKALAKQGKYVMVGLFGADLHYHAPLITLSEIQFVGSLVGNQSDFLGIMRLAEAGKVKPMITKTMKLEEANEAIDNLENFKAIGRQVLIP.

An N6-methyllysine; partial modification is found at lysine 11. Zn(2+) contacts are provided by cysteine 38, histidine 68, glutamate 98, cysteine 101, cysteine 104, cysteine 112, and cysteine 154. N6-methyllysine; partial is present on lysine 213.

This sequence belongs to the zinc-containing alcohol dehydrogenase family. Homodimer and homotetramer. Zn(2+) serves as cofactor.

It catalyses the reaction a primary alcohol + NAD(+) = an aldehyde + NADH + H(+). It carries out the reaction a secondary alcohol + NAD(+) = a ketone + NADH + H(+). The chain is NAD-dependent alcohol dehydrogenase (adh) from Saccharolobus solfataricus (strain ATCC 35092 / DSM 1617 / JCM 11322 / P2) (Sulfolobus solfataricus).